Reading from the N-terminus, the 347-residue chain is NADH-ubiquinone oxidoreductase chain 2 (347 aa).

The next 10 helical transmembrane spans lie at M1 to M21, H25 to M45, Y59 to M79, I96 to P116, I148 to G168, I178 to P198, L200 to I220, M237 to L257, N274 to M294, and L326 to L346.

Belongs to the complex I subunit 2 family. Core subunit of respiratory chain NADH dehydrogenase (Complex I) which is composed of 45 different subunits. Interacts with TMEM242.

Its subcellular location is the mitochondrion inner membrane. It carries out the reaction a ubiquinone + NADH + 5 H(+)(in) = a ubiquinol + NAD(+) + 4 H(+)(out). Functionally, core subunit of the mitochondrial membrane respiratory chain NADH dehydrogenase (Complex I) which catalyzes electron transfer from NADH through the respiratory chain, using ubiquinone as an electron acceptor. Essential for the catalytic activity and assembly of complex I. This is NADH-ubiquinone oxidoreductase chain 2 from Gardnerycteris crenulata (Striped hairy-nosed bat).